The chain runs to 177 residues: uncharacterized protein (177 aa).

Residues 122–177 (LPFTRNGSGQQSNKLRDPKKGRTHKPKPSEKHKKNKTGKKGAQEKTHRSRSSRKGN) form a disordered region. Basic residues-rich tracts occupy residues 142–160 (GRTH…KTGK) and 168–177 (HRSRSSRKGN).

This is an uncharacterized protein from Saccharomyces cerevisiae (strain ATCC 204508 / S288c) (Baker's yeast).